Reading from the N-terminus, the 242-residue chain is UPF0309 protein BOV_A0853 (242 aa).

The SIS domain occupies 30-209 (AADLIAAAAR…FADVAARLVG (180 aa)).

It belongs to the UPF0309 family.

This chain is UPF0309 protein BOV_A0853, found in Brucella ovis (strain ATCC 25840 / 63/290 / NCTC 10512).